The following is a 158-amino-acid chain: Large ribosomal subunit protein bL19 (158 aa).

The span at 119 to 129 shows a compositional bias: basic and acidic residues; the sequence is SDRSRVMKDAA. The tract at residues 119–158 is disordered; the sequence is SDRSRVMKDAARAQQARDAAQGNSSSETQSSTAAVETQGE. Low complexity predominate over residues 130–139; that stretch reads RAQQARDAAQ. The span at 140–158 shows a compositional bias: polar residues; the sequence is GNSSSETQSSTAAVETQGE.

The protein belongs to the bacterial ribosomal protein bL19 family.

Functionally, this protein is located at the 30S-50S ribosomal subunit interface and may play a role in the structure and function of the aminoacyl-tRNA binding site. The polypeptide is Large ribosomal subunit protein bL19 (Deinococcus geothermalis (strain DSM 11300 / CIP 105573 / AG-3a)).